The primary structure comprises 721 residues: Zinc-transporting ATPase (721 aa).

Residues 1–107 lie on the Cytoplasmic side of the membrane; that stretch reads MTQSSPLKTQ…HSHGAGEFNL (107 aa). Positions 8-74 constitute an HMA domain; sequence KTQQMQVGGM…RIAALGYTLA (67 aa). Residues Cys19 and Cys22 each coordinate Zn(2+). A disordered region spans residues 80-101; the sequence is VTLNGHKHPHSHREEGHSHSHG. A helical transmembrane segment spans residues 108-128; that stretch reads KQELLPVLTAIALFTIAILFE. Over 129 to 140 the chain is Extracellular; that stretch reads QPLHNTPGQIAE. The helical transmembrane segment at 141-160 threads the bilayer; the sequence is FAVIIPAYLLSGWTVLKTAG. Over 161–167 the chain is Cytoplasmic; that stretch reads RNILRGQ. The chain crosses the membrane as a helical span at residues 168-187; the sequence is IFDENFLMTIATLGALAIHQ. At 188–190 the chain is on the extracellular side; sequence LPE. A helical membrane pass occupies residues 191–210; the sequence is AVAVMLFFRVGELFQEYSVG. Residues 211–344 lie on the Cytoplasmic side of the membrane; it reads RSRRSIKALL…ITQFARYYTP (134 aa). The helical transmembrane segment at 345–363 threads the bilayer; sequence VIVFLSLAVALLPPLFIPG. The Extracellular portion of the chain corresponds to 364-369; that stretch reads ADRADW. A helical transmembrane segment spans residues 370–387; it reads VYRALVLLVISCPCGLVI. Residues 388 to 671 are Cytoplasmic-facing; that stretch reads SIPLGYFGGI…AIHVARKTRQ (284 aa). The active-site 4-aspartylphosphate intermediate is the Asp425. Residues Asp618 and Asp622 each coordinate Mg(2+). The chain crosses the membrane as a helical span at residues 672–693; the sequence is IVVQNIVLALGIKALFIALGTI. Residues 694–701 lie on the Extracellular side of the membrane; sequence GLATLWEA. A helical membrane pass occupies residues 702–717; that stretch reads VFADVGVALLAILNAT. Residues 718–721 are Cytoplasmic-facing; it reads RIAK.

Belongs to the cation transport ATPase (P-type) (TC 3.A.3) family. Type IB subfamily.

Its subcellular location is the cell membrane. It carries out the reaction Zn(2+)(in) + ATP + H2O = Zn(2+)(out) + ADP + phosphate + H(+). In Synechocystis sp. (strain ATCC 27184 / PCC 6803 / Kazusa), this protein is Zinc-transporting ATPase (ziaA).